Consider the following 160-residue polypeptide: Endoribonuclease YbeY (160 aa).

Zn(2+) is bound by residues His111, His115, and His121.

The protein belongs to the endoribonuclease YbeY family. Requires Zn(2+) as cofactor.

It is found in the cytoplasm. Single strand-specific metallo-endoribonuclease involved in late-stage 70S ribosome quality control and in maturation of the 3' terminus of the 16S rRNA. This Stutzerimonas stutzeri (strain A1501) (Pseudomonas stutzeri) protein is Endoribonuclease YbeY.